Here is a 256-residue protein sequence, read N- to C-terminus: Imidazole glycerol phosphate synthase subunit hisF1 (256 aa).

Residues aspartate 11 and aspartate 130 contribute to the active site.

This sequence belongs to the HisA/HisF family. Heterodimer of HisH and HisF.

The protein resides in the cytoplasm. It carries out the reaction 5-[(5-phospho-1-deoxy-D-ribulos-1-ylimino)methylamino]-1-(5-phospho-beta-D-ribosyl)imidazole-4-carboxamide + L-glutamine = D-erythro-1-(imidazol-4-yl)glycerol 3-phosphate + 5-amino-1-(5-phospho-beta-D-ribosyl)imidazole-4-carboxamide + L-glutamate + H(+). It participates in amino-acid biosynthesis; L-histidine biosynthesis; L-histidine from 5-phospho-alpha-D-ribose 1-diphosphate: step 5/9. Its function is as follows. IGPS catalyzes the conversion of PRFAR and glutamine to IGP, AICAR and glutamate. The HisF subunit catalyzes the cyclization activity that produces IGP and AICAR from PRFAR using the ammonia provided by the HisH subunit. This chain is Imidazole glycerol phosphate synthase subunit hisF1 (hisF1), found in Parasynechococcus marenigrum (strain WH8102).